We begin with the raw amino-acid sequence, 100 residues long: MEIAVIGNSEFILGFRLAGITKTYAAESDEKVVEYVHKVLDDGKIGILVLNSSDMAKIPVRLRTTLENSVHPTVITLGEEEGGLSMRERIKRSVGVDLWK.

It belongs to the V-ATPase F subunit family. In terms of assembly, has multiple subunits with at least A(3), B(3), C, D, E, F, H, I and proteolipid K(x).

The protein localises to the cell membrane. Functionally, component of the A-type ATP synthase that produces ATP from ADP in the presence of a proton gradient across the membrane. The protein is A-type ATP synthase subunit F of Methanospirillum hungatei JF-1 (strain ATCC 27890 / DSM 864 / NBRC 100397 / JF-1).